We begin with the raw amino-acid sequence, 525 residues long: GMP synthase [glutamine-hydrolyzing] (525 aa).

One can recognise a Glutamine amidotransferase type-1 domain in the interval 13-202 (TILVLDFGSQ…AVEICQAAQT (190 aa)). The active-site Nucleophile is the C89. Active-site residues include H176 and E178. The GMPS ATP-PPase domain occupies 203 to 400 (WTMENFIDTE…LGISHELVWR (198 aa)). 231 to 237 (SGGVDST) provides a ligand contact to ATP. Residues R304, D462, K517, and E523 each contribute to the XMP site.

As to quaternary structure, homodimer. It depends on Mg(2+) as a cofactor.

It localises to the cytoplasm. The protein resides in the cytosol. It carries out the reaction XMP + L-glutamine + ATP + H2O = GMP + L-glutamate + AMP + diphosphate + 2 H(+). It functions in the pathway purine metabolism; GMP biosynthesis; GMP from XMP (L-Gln route): step 1/1. Functionally, catalyzes the conversion of xanthine monophosphate (XMP) to GMP in the presence of glutamine and ATP through an adenyl-XMP intermediate. The chain is GMP synthase [glutamine-hydrolyzing] (GUA1) from Eremothecium gossypii (strain ATCC 10895 / CBS 109.51 / FGSC 9923 / NRRL Y-1056) (Yeast).